Consider the following 89-residue polypeptide: Large ribosomal subunit protein bL27 (89 aa).

It belongs to the bacterial ribosomal protein bL27 family.

The sequence is that of Large ribosomal subunit protein bL27 from Bacteroides thetaiotaomicron (strain ATCC 29148 / DSM 2079 / JCM 5827 / CCUG 10774 / NCTC 10582 / VPI-5482 / E50).